Consider the following 189-residue polypeptide: Putative manganese efflux pump MntP (189 aa).

The next 6 membrane-spanning stretches (helical) occupy residues 3–23 (LSAT…ASIG), 41–61 (LIFG…GLFA), 65–85 (ILEW…CRMI), 104–124 (FWVL…IGVG), 132–152 (IVHT…LGML), and 165–185 (AEII…YEHI).

The protein belongs to the MntP (TC 9.B.29) family.

It is found in the cell inner membrane. Its function is as follows. Probably functions as a manganese efflux pump. The chain is Putative manganese efflux pump MntP from Yersinia enterocolitica serotype O:8 / biotype 1B (strain NCTC 13174 / 8081).